The following is a 451-amino-acid chain: MRECISIHIGQAGIQVGNACWELYCLEHGIQPDGQMPGDKTVGGGDDAFNTFFSETGAGKHVPRAVFVDLEPTVIDEVRTGAYRQLFHPEQLISGKEDAANNFARGHYTIGKEIVDLCLDRIRKLSDNCTGLQGFLVFNAVGGGTGSGLGSLLLERLSVDYGRKSKLGFTVYPSPQVSTSVVEPYNSVLSTHSLLEHTDVSILLDNEAIYDICRRSLDIERPTYTNLNRLVSQVISSLTASLRFDGALNVDVNEFQTNLVPYPRIHFMLSSYAPVISAEKAYHEQLSVAEITNSAFEPSSMMAKCDPRHGKYMACCLMYRGDVVPKDVNAAVATIKTKRTIQFVDWCPTGFKCGINYQPPGVVPGGDLAKVQRAVCMISNSTSVVEVFSRIDHKFDLMYAKRAFVHWYVGEGMEEGEFSEAREDLAALEKDYEEVGAEFDEGEDGDEGDEY.

A GTP-binding site is contributed by Gln-11. Lys-40 carries the N6-acetyllysine modification. 6 residues coordinate GTP: Glu-71, Gly-144, Thr-145, Thr-179, Asn-206, and Asn-228. Glu-71 is a Mg(2+) binding site. Residue Glu-254 is part of the active site.

This sequence belongs to the tubulin family. As to quaternary structure, dimer of alpha and beta chains. A typical microtubule is a hollow water-filled tube with an outer diameter of 25 nm and an inner diameter of 15 nM. Alpha-beta heterodimers associate head-to-tail to form protofilaments running lengthwise along the microtubule wall with the beta-tubulin subunit facing the microtubule plus end conferring a structural polarity. Microtubules usually have 13 protofilaments but different protofilament numbers can be found in some organisms and specialized cells. It depends on Mg(2+) as a cofactor. In terms of processing, undergoes a tyrosination/detyrosination cycle, the cyclic removal and re-addition of a C-terminal tyrosine residue by the enzymes tubulin tyrosine carboxypeptidase (TTCP) and tubulin tyrosine ligase (TTL), respectively. Post-translationally, acetylation of alpha chains at Lys-40 stabilizes microtubules and affects affinity and processivity of microtubule motors. This modification has a role in multiple cellular functions, ranging from cell motility, cell cycle progression or cell differentiation to intracellular trafficking and signaling.

The protein resides in the cytoplasm. It localises to the cytoskeleton. It catalyses the reaction GTP + H2O = GDP + phosphate + H(+). Functionally, tubulin is the major constituent of microtubules, a cylinder consisting of laterally associated linear protofilaments composed of alpha- and beta-tubulin heterodimers. Microtubules grow by the addition of GTP-tubulin dimers to the microtubule end, where a stabilizing cap forms. Below the cap, tubulin dimers are in GDP-bound state, owing to GTPase activity of alpha-tubulin. The polypeptide is Tubulin alpha chain (TUBA) (Triticum aestivum (Wheat)).